Reading from the N-terminus, the 926-residue chain is MEQNIISTIRDECIRHRSKYLTIAQLTAIAEAKINEFIITGKAKDQDLSSLLDKCIDILSIYKKNSKDIKNIISCKNKGAMISSNSVMIIQLNYVYYKVIHIIVTTNIPHLSEFAKIKLHKSTSDEGNGNNNNNEFQLMNIYNTLLETLLKDENIAKIKSFIKSSIKQTKLNHEQEECNLMRTGSYITSNQLNSLISSSANSASSQMEILLIDIRSRLEFNKSHIDTKNIICLEPISFKMSYSDHDLEKKSLITSPNSEIKMFQSRNLFKFIILYTDANEYNVKQQSVLLDILVNHSFEKPISDDFTKIFILESGFPGWLKSNYGRQVSSSFPSNNNIKDDSVYINGNTSGLSLQHLPKMSPSIRHSMDDSMKEMLVAPTPLNHLQQQQQQQSDNDHVLKRSSSFKKLFSNYTSPNPKNSNSNLYSISSLSISSSPSPLPLHSPDPVKGNSLPINYPETPHLWKNSETDFMTNQREQLNHNSFAHIAPINTKAITSPSRTATPKLQRFPQTISMNLNMNSNGHSSATSTIQPSCLSLSNNDSLDHTDVTPTSSHNYDLDFAVGLENLGNSCYMNCIIQCILGTHELTQIFLDDSYAKHININSKLGSKGILAKYFARLVHMMYKEQVDGSKKISISPIKFKLACGSVNSLFKTASQQDCQEFCQFLLDGLHEDLNQCGSNPPLKELSQEAEARREKLSLRIASSIEWERFLTTDFSVIVDLFQGQYASRLKCKVCSHTSTTYQPFTVLSIPIPKKNSRNNITIEDCFREFTKCENLEVDEQWLCPHCEKRQPSTKQLTITRLPRNLIVHLKRFDNLLNKNNDFVIYPFLLDLTPFWANDFDGVFPPGVNDDELPIRGQIPPFKYELYGVACHFGTLYGGHYTAYVKKGLKKGWLYFDDTKYKPVKNKADAINSNAYVLFYHRVYGV.

The region spanning 205–328 is the Rhodanese domain; it reads SQMEILLIDI…WLKSNYGRQV (124 aa). Ser-443 is modified (phosphoserine). One can recognise a USP domain in the interval 562–923; the sequence is VGLENLGNSC…NAYVLFYHRV (362 aa). The active-site Nucleophile is Cys-571. The active-site Proton acceptor is His-880.

Belongs to the peptidase C19 family. As to quaternary structure, interacts with BRO1, RFU1 and VPS32. Associates with the 26S proteasome.

The protein resides in the cytoplasm. The protein localises to the late endosome membrane. It catalyses the reaction Thiol-dependent hydrolysis of ester, thioester, amide, peptide and isopeptide bonds formed by the C-terminal Gly of ubiquitin (a 76-residue protein attached to proteins as an intracellular targeting signal).. With respect to regulation, RFU1 is an inhibitor of deubiquitination activity. In terms of biological role, ubiquitin thioesterase that acts at the late endosome/prevacuolar compartment to recover ubiquitin from ubiquitinated membrane proteins en route to the vacuole. Also removes ubiquitin from soluble proteins targeted to proteasomes. Is essential to maintain a normal level of free ubiquitin. Involved in the ammonium-induced down-regulation of the GAP1 permease and the UME3 destruction in response to oxidative stress. Has a role in the RAD9 checkpoint response to TOP1 poisons. Required for promoting coordination of DNA replication and avoids DNA overreplication. This chain is Ubiquitin carboxyl-terminal hydrolase 4 (DOA4), found in Saccharomyces cerevisiae (strain ATCC 204508 / S288c) (Baker's yeast).